A 158-amino-acid chain; its full sequence is C-type lection lectoxin-Enh3 (158 aa).

The first 23 residues, 1-23, serve as a signal peptide directing secretion; the sequence is MGQFTVVSLGLLAMFLSLSGAKG. Disulfide bonds link cysteine 26/cysteine 37, cysteine 54/cysteine 154, and cysteine 129/cysteine 146. Positions 33 to 155 constitute a C-type lectin domain; sequence RNGVCNKLFP…CASLHPFICQ (123 aa). The Mannose-binding signature appears at 119 to 121; it reads EPN. Glutamate 127, asparagine 142, and aspartate 143 together coordinate Ca(2+).

Belongs to the true venom lectin family. As to expression, expressed by the venom gland.

It localises to the secreted. In terms of biological role, mannose-binding lectin which recognizes specific carbohydrate structures and agglutinates a variety of animal cells by binding to cell-surface glycoproteins and glycolipids. May be a calcium-dependent lectin. The sequence is that of C-type lection lectoxin-Enh3 from Pseudoferania polylepis (Macleay's water snake).